A 399-amino-acid chain; its full sequence is Transferrin receptor subunit ESAG6 (399 aa).

Positions 1 to 17 (MRFWFVLLALLGKEIYA) are cleaved as a signal peptide. N-linked (GlcNAc...) asparagine glycosylation is found at asparagine 26 and asparagine 110. Intrachain disulfides connect cysteine 34/cysteine 161, cysteine 84/cysteine 312, and cysteine 144/cysteine 215. Residues asparagine 235, asparagine 250, and asparagine 360 are each glycosylated (N-linked (GlcNAc...) asparagine). A lipid anchor (GPI-anchor amidated asparagine) is attached at asparagine 376. A propeptide spans 377–399 (AAAIHLSVSTAALCRSALLLGVL) (removed in mature form).

As to quaternary structure, heterodimer composed of ESAG6 and ESAG7. N-glycosylated. Glycosylation is dispensable for heterodimer formation and host transferrin binding.

It is found in the cell membrane. The protein resides in the flagellar pocket. In terms of biological role, transferrin receptor subunit involved in receptor-mediated acquisition of iron from the environment by binding host TF/transferrin. The chain is Transferrin receptor subunit ESAG6 from Trypanosoma brucei brucei.